The chain runs to 906 residues: E3 ubiquitin-protein ligase CBL (906 aa).

The segment at 1 to 21 is disordered; sequence MAGNVKKSSGAGGGSGSGGSG. The tract at residues 1–357 is sufficient for interaction with EPHB1; the sequence is MAGNVKKSSG…DLTGLCEPTP (357 aa). The span at 10–21 shows a compositional bias: gly residues; that stretch reads GAGGGSGSGGSG. The tract at residues 47–175 is 4H; the sequence is PPGTVDKKMV…KGIFPSGLFQ (129 aa). A Cbl-PTB domain is found at 47-351; sequence PPGTVDKKMV…GRNQNPDLTG (305 aa). Positions 176-248 are EF-hand-like; that stretch reads GDTFRITKAD…FEFDIFTRLF (73 aa). Ca(2+) is bound by residues Asp-229, Thr-231, Asn-233, Tyr-235, and Glu-240. The tract at residues 249 to 351 is SH2-like; the sequence is QPWSSLLRNW…GRNQNPDLTG (103 aa). Arg-294 provides a ligand contact to 4-O-phospho-L-tyrosine. The tract at residues 352–380 is linker; the sequence is LCEPTPQDHIKVTQEQYELYCEMGSTFQL. Residues 358-906 are required for ubiquitination of SPRED2; that stretch reads QDHIKVTQEQ…SISSPAHVAT (549 aa). Tyr-371 is subject to Phosphotyrosine; by INSR. The segment at 381–420 adopts an RING-type zinc-finger fold; that stretch reads CKICAENDKDVKIEPCGHLMCTSCLTSWQESEGQGCPFCR. Disordered regions lie at residues 432–462, 477–498, and 519–667; these read DPFDPRGSGSLLRQGAEGAPSPNYDDDDDER, KVERPPSPFSMAPQASLPPVPP, and ASKA…IKPS. 3 positions are modified to phosphoserine: Ser-439, Ser-452, and Ser-483. A compositionally biased stretch (pro residues) spans 533-550; the sequence is LPVPPTLRDLPPPPPPDR. Phosphoserine occurs at positions 619, 642, 668, and 669. A compositionally biased stretch (polar residues) spans 639–653; the sequence is STFSLDTSMSMNSSP. The segment at 648–906 is interaction with CD2AP; the sequence is SMNSSPLVGP…SISSPAHVAT (259 aa). Residue Tyr-674 is modified to Phosphotyrosine. A disordered region spans residues 680-719; it reads PLPVPKLPPGEQCEGEEDTEYMTPSSRPLRPLDTSQSSRA. Residue Tyr-700 is modified to Phosphotyrosine; by ABL1. Position 731 is a phosphotyrosine; by SRC (Tyr-731). Disordered stretches follow at residues 743–781 and 799–854; these read SITESSTFGEGNLAAAHANTGPEESENEDDGYDVPKPPV and SFGW…ATAS. Acidic residues predominate over residues 765 to 774; it reads EESENEDDGY. Position 774 is a phosphotyrosine (Tyr-774). Positions 838–854 are enriched in low complexity; the sequence is GSCQQGSGPAASAATAS. In terms of domain architecture, UBA spans 856–895; it reads QLSSEIENLMSQGYSYQDIQKALVIAQNNIEMAKNILREF. Ser-900 carries the phosphoserine modification.

In terms of assembly, forms homodimers; IFT20 promotes the formation of stable homodimers. Interacts (phosphorylated at Tyr-731) with PIK3R1. Associates with NCK via its SH3 domain. The phosphorylated C-terminus interacts with CD2AP via its second SH3 domain. Binds to UBE2L3. Interacts with adapters SLA, SLA2 and with the phosphorylated C-terminus of SH2B2. Interacts with EGFR, SYK and ZAP70 via the highly conserved Cbl-N region. Also interacts with SORBS1 and INPPL1/SHIP2. Interacts with phosphorylated LAT2. Interacts with CBLB. Interacts with ALK, AXL, BLK, FGR and FGFR2. Interacts with CSF1R, EPHB1, FLT1, KDR, PDGFRA and PDGFRB; regulates receptor degradation through ubiquitination. Interacts with HCK and LYN. Interacts with ATX2. Interacts with TEK/TIE2 (tyrosine phosphorylated). Interacts with SH3KBP1 and this interaction is inhibited in the presence of SHKBP1 or ARAP1. Interacts with SIGLEC10. Interacts with IFT20. Interacts with SPRY2; the interaction inhibits CBL-mediated ubiquitination of EGFR. Interacts (phosphorylated at Tyr-774) with tensin TNS4 (via SH2 domain); the interaction is enhanced in the presence of EGF and reduces interaction of CBL with EGFR. Interacts with EGFR; the interaction is reduced in the presence of TNS4. Interacts with CD5. Interacts with CD93. As to quaternary structure, (Microbial infection) Interacts with M.tuberculosis LpqN, which influences the balance between intrinsic antibacterial and antiviral defense. Post-translationally, phosphorylated on tyrosine residues by ALK, EGFR, SYK, FYN and ZAP70. Phosphorylated on tyrosine residues in response to FLT1 and KIT signaling. Phosphorylated on tyrosine residues by INSR and FGR. Phosphorylated on several tyrosine residues by constitutively activated FGFR3. Not phosphorylated at Tyr-731 by FGFR3. Phosphorylated on tyrosine residues by activated CSF1R, PDGFRA and PDGFRB. Phosphorylated on tyrosine residues by HCK. Ubiquitinated, leading to its degradation via the proteasome. Ubiquitination is negatively regulated by IFT20.

Its subcellular location is the cytoplasm. The protein resides in the cell membrane. It is found in the cell projection. It localises to the cilium. The protein localises to the golgi apparatus. It carries out the reaction S-ubiquitinyl-[E2 ubiquitin-conjugating enzyme]-L-cysteine + [acceptor protein]-L-lysine = [E2 ubiquitin-conjugating enzyme]-L-cysteine + N(6)-ubiquitinyl-[acceptor protein]-L-lysine.. Its pathway is protein modification; protein ubiquitination. E3 ubiquitin-protein ligase that acts as a negative regulator of many signaling pathways by mediating ubiquitination of cell surface receptors. Accepts ubiquitin from specific E2 ubiquitin-conjugating enzymes, and then transfers it to substrates promoting their degradation by the proteasome. Recognizes activated receptor tyrosine kinases, including KIT, FLT1, FGFR1, FGFR2, PDGFRA, PDGFRB, CSF1R, EPHA8 and KDR and mediates their ubiquitination to terminate signaling. Recognizes membrane-bound HCK, SRC and other kinases of the SRC family and mediates their ubiquitination and degradation. Ubiquitinates EGFR and SPRY2. Ubiquitinates NECTIN1 following association between NECTIN1 and herpes simplex virus 1/HHV-1 envelope glycoprotein D, leading to NECTIN1 removal from cell surface. Participates in signal transduction in hematopoietic cells. Plays an important role in the regulation of osteoblast differentiation and apoptosis. Essential for osteoclastic bone resorption. The 'Tyr-731' phosphorylated form induces the activation and recruitment of phosphatidylinositol 3-kinase to the cell membrane in a signaling pathway that is critical for osteoclast function. May be functionally coupled with the E2 ubiquitin-protein ligase UB2D3. In association with CBLB, required for proper feedback inhibition of ciliary platelet-derived growth factor receptor-alpha (PDGFRA) signaling pathway via ubiquitination and internalization of PDGFRA. This is E3 ubiquitin-protein ligase CBL (CBL) from Homo sapiens (Human).